Here is a 498-residue protein sequence, read N- to C-terminus: ATP synthase subunit beta, chloroplastic (498 aa).

Residue 172 to 179 (GGAGVGKT) coordinates ATP.

Belongs to the ATPase alpha/beta chains family. As to quaternary structure, F-type ATPases have 2 components, CF(1) - the catalytic core - and CF(0) - the membrane proton channel. CF(1) has five subunits: alpha(3), beta(3), gamma(1), delta(1), epsilon(1). CF(0) has four main subunits: a(1), b(1), b'(1) and c(9-12).

The protein resides in the plastid. It localises to the chloroplast thylakoid membrane. The catalysed reaction is ATP + H2O + 4 H(+)(in) = ADP + phosphate + 5 H(+)(out). Functionally, produces ATP from ADP in the presence of a proton gradient across the membrane. The catalytic sites are hosted primarily by the beta subunits. The chain is ATP synthase subunit beta, chloroplastic from Citrus sinensis (Sweet orange).